The chain runs to 259 residues: Putative zinc metalloprotease Rip2 (259 aa).

A run of 2 helical transmembrane segments spans residues 14-34 (PIFL…WLAG) and 39-59 (PLAY…SLCL). Histidine 60 provides a ligand contact to Zn(2+). The active site involves glutamate 61. Zn(2+) is bound at residue histidine 64. The next 4 helical transmembrane spans lie at 97 to 117 (GLPM…AVYV), 128 to 148 (TLVS…LLAA), 156 to 176 (IHAV…TALV), and 215 to 235 (LVLF…YWLF).

This sequence belongs to the peptidase M50B family. The cofactor is Zn(2+).

The protein resides in the cell membrane. The chain is Putative zinc metalloprotease Rip2 (rip2) from Mycobacterium tuberculosis (strain ATCC 35801 / TMC 107 / Erdman).